A 548-amino-acid polypeptide reads, in one-letter code: Chaperonin GroEL (548 aa).

ATP contacts are provided by residues 30–33 (TLGP), Lys51, 87–91 (DGTTT), Gly415, 479–481 (NAA), and Asp495.

Belongs to the chaperonin (HSP60) family. In terms of assembly, forms a cylinder of 14 subunits composed of two heptameric rings stacked back-to-back. Interacts with the co-chaperonin GroES.

The protein localises to the cytoplasm. It catalyses the reaction ATP + H2O + a folded polypeptide = ADP + phosphate + an unfolded polypeptide.. Together with its co-chaperonin GroES, plays an essential role in assisting protein folding. The GroEL-GroES system forms a nano-cage that allows encapsulation of the non-native substrate proteins and provides a physical environment optimized to promote and accelerate protein folding. The protein is Chaperonin GroEL of Oleidesulfovibrio alaskensis (strain ATCC BAA-1058 / DSM 17464 / G20) (Desulfovibrio alaskensis).